The chain runs to 125 residues: Small ribosomal subunit protein uS13 (125 aa).

A disordered region spans residues 92–125 (RRSLPVRGQRTQTNARTRKGKRKTVAGKKKATKK). Basic residues predominate over residues 107–125 (RTRKGKRKTVAGKKKATKK).

This sequence belongs to the universal ribosomal protein uS13 family. In terms of assembly, part of the 30S ribosomal subunit. Forms a loose heterodimer with protein S19. Forms two bridges to the 50S subunit in the 70S ribosome.

In terms of biological role, located at the top of the head of the 30S subunit, it contacts several helices of the 16S rRNA. In the 70S ribosome it contacts the 23S rRNA (bridge B1a) and protein L5 of the 50S subunit (bridge B1b), connecting the 2 subunits; these bridges are implicated in subunit movement. Contacts the tRNAs in the A and P-sites. The chain is Small ribosomal subunit protein uS13 from Chlorobium limicola (strain DSM 245 / NBRC 103803 / 6330).